Consider the following 409-residue polypeptide: Histidinol dehydrogenase homolog (409 aa).

It belongs to the histidinol dehydrogenase family.

This Synechocystis sp. (strain ATCC 27184 / PCC 6803 / Kazusa) protein is Histidinol dehydrogenase homolog.